The primary structure comprises 285 residues: Ret finger protein-like 4A (285 aa).

The RING-type; degenerate zinc-finger motif lies at C11 to S53. The 199-residue stretch at E78–S276 folds into the B30.2/SPRY domain.

As to quaternary structure, interacts with PSMB1, UBE2A and CCNB1.

Its subcellular location is the cytoplasm. The protein resides in the nucleus. The protein is Ret finger protein-like 4A (Rfpl4a) of Rattus norvegicus (Rat).